The sequence spans 150 residues: Testis-expressed protein 22 (150 aa).

Basic and acidic residues predominate over residues 1 to 23; it reads MDSRKLSPRGKKLESHLSQEHRR. The interval 1 to 26 is disordered; the sequence is MDSRKLSPRGKKLESHLSQEHRRPPL.

The protein resides in the cytoplasm. The protein localises to the cytoplasmic vesicle. It is found in the secretory vesicle. It localises to the acrosome. The sequence is that of Testis-expressed protein 22 (TEX22) from Homo sapiens (Human).